The chain runs to 174 residues: Shikimate kinase 2 (174 aa).

Gly12 to Thr17 contributes to the ATP binding site. Residues Thr16 and Asp32 each contribute to the Mg(2+) site. 3 residues coordinate substrate: Asp34, Arg58, and Gly79. An LID domain region spans residues Gln112–Lys126. Arg120 is a binding site for ATP. Arg139 serves as a coordination point for substrate.

Belongs to the shikimate kinase family. AroL subfamily. Monomer. Mg(2+) is required as a cofactor.

The protein resides in the cytoplasm. The catalysed reaction is shikimate + ATP = 3-phosphoshikimate + ADP + H(+). Its pathway is metabolic intermediate biosynthesis; chorismate biosynthesis; chorismate from D-erythrose 4-phosphate and phosphoenolpyruvate: step 5/7. Functionally, catalyzes the specific phosphorylation of the 3-hydroxyl group of shikimic acid using ATP as a cosubstrate. The sequence is that of Shikimate kinase 2 from Escherichia coli O7:K1 (strain IAI39 / ExPEC).